Here is a 519-residue protein sequence, read N- to C-terminus: Putative tyrosine carboxypeptidase MATCAP2 (519 aa).

A disordered region spans residues 63-103 (SKEEKKHRSQKRFSSASSKQHRKPSKSPSSSHSKDPSRMTA). Residue His330 participates in Zn(2+) binding. Glu331 (nucleophile) is an active-site residue. Residues His335 and Glu366 each coordinate Zn(2+).

Zn(2+) is required as a cofactor.

Putative tyrosine carboxypeptidase. This is Putative tyrosine carboxypeptidase MATCAP2 from Mus musculus (Mouse).